A 739-amino-acid chain; its full sequence is Tegument protein UL47 (739 aa).

Residues M1 to R13 show a composition bias toward basic and acidic residues. 2 disordered regions span residues M1–L123 and Q154–A198. A Nuclear localization signal motif is present at residues E10 to R30. Residues S28 to R53 show a composition bias toward basic residues. Residues E62–S87 are compositionally biased toward acidic residues. Positions R94–D121 match the Nuclear export signal motif. Positions L483 to L493 match the Nuclear export signal motif.

It belongs to the alphaherpesvirinae HHV-1 UL47 family. As to quaternary structure, interacts with US3 kinase. Interacts with UL31 and UL34; these interactions seem important for efficient virion nuclear egress. Interacts with UL41/VHS. Interacts with host DDB1. Post-translationally, monoubiquitinated. In terms of processing, phosphorylated by US3. This phosphorylation is required for proper nuclear localization.

The protein localises to the virion tegument. It localises to the host nucleus. It is found in the host cytoplasm. Functionally, tegument protein that can bind to various RNA transcripts. Plays a role in the attenuation of selective viral and cellular mRNA degradation by modulating the activity of host shutoff RNase UL41/VHS. Also plays a role in the primary envelopment of virions in the perinuclear space, probably by interacting with two nuclear egress proteins UL31 and UL34. In Bovine herpesvirus 1.1 (strain Cooper) (BoHV-1), this protein is Tegument protein UL47.